Here is a 386-residue protein sequence, read N- to C-terminus: 8-amino-7-oxononanoate synthase (386 aa).

Arg31 lines the substrate pocket. 109 to 110 (GY) serves as a coordination point for pyridoxal 5'-phosphate. His134 contacts substrate. Pyridoxal 5'-phosphate-binding positions include Ser180, 205–208 (DEAH), and 236–239 (TLSK). Lys239 bears the N6-(pyridoxal phosphate)lysine mark. Thr349 lines the substrate pocket.

Belongs to the class-II pyridoxal-phosphate-dependent aminotransferase family. BioF subfamily. Homodimer. The cofactor is pyridoxal 5'-phosphate.

It carries out the reaction 6-carboxyhexanoyl-[ACP] + L-alanine + H(+) = (8S)-8-amino-7-oxononanoate + holo-[ACP] + CO2. It functions in the pathway cofactor biosynthesis; biotin biosynthesis. In terms of biological role, catalyzes the decarboxylative condensation of pimeloyl-[acyl-carrier protein] and L-alanine to produce 8-amino-7-oxononanoate (AON), [acyl-carrier protein], and carbon dioxide. The sequence is that of 8-amino-7-oxononanoate synthase from Mycobacterium bovis (strain ATCC BAA-935 / AF2122/97).